We begin with the raw amino-acid sequence, 184 residues long: UPF0316 protein BLi00691/BL01474 (184 aa).

A run of 3 helical transmembrane segments spans residues 9–29 (GVIMVGIILVINIIYVTFLTL), 41–61 (LAAFIGTIEMLVYVVGLGLVL), and 67–87 (IQNVIAYAVGFGIGIIVGTKI).

This sequence belongs to the UPF0316 family.

The protein resides in the cell membrane. The chain is UPF0316 protein BLi00691/BL01474 from Bacillus licheniformis (strain ATCC 14580 / DSM 13 / JCM 2505 / CCUG 7422 / NBRC 12200 / NCIMB 9375 / NCTC 10341 / NRRL NRS-1264 / Gibson 46).